The following is a 253-amino-acid chain: Ubiquinone/menaquinone biosynthesis C-methyltransferase UbiE (253 aa).

Residues T76, D97, 125–126 (NA), and S142 contribute to the S-adenosyl-L-methionine site.

The protein belongs to the class I-like SAM-binding methyltransferase superfamily. MenG/UbiE family.

The enzyme catalyses a 2-demethylmenaquinol + S-adenosyl-L-methionine = a menaquinol + S-adenosyl-L-homocysteine + H(+). It carries out the reaction a 2-methoxy-6-(all-trans-polyprenyl)benzene-1,4-diol + S-adenosyl-L-methionine = a 5-methoxy-2-methyl-3-(all-trans-polyprenyl)benzene-1,4-diol + S-adenosyl-L-homocysteine + H(+). It functions in the pathway quinol/quinone metabolism; menaquinone biosynthesis; menaquinol from 1,4-dihydroxy-2-naphthoate: step 2/2. The protein operates within cofactor biosynthesis; ubiquinone biosynthesis. In terms of biological role, methyltransferase required for the conversion of demethylmenaquinol (DMKH2) to menaquinol (MKH2) and the conversion of 2-polyprenyl-6-methoxy-1,4-benzoquinol (DDMQH2) to 2-polyprenyl-3-methyl-6-methoxy-1,4-benzoquinol (DMQH2). This chain is Ubiquinone/menaquinone biosynthesis C-methyltransferase UbiE, found in Xylella fastidiosa (strain M23).